Consider the following 285-residue polypeptide: Sulfotransferase 2A6 (285 aa).

44 to 49 (KSGTNW) is a binding site for 3'-phosphoadenylyl sulfate. Residue H99 is the Proton acceptor of the active site. Residues R121, S129, Y184, 218-223 (SSFQAM), and 247-249 (RKG) each bind 3'-phosphoadenylyl sulfate.

This sequence belongs to the sulfotransferase 1 family. Oligomer.

It localises to the cytoplasm. The protein localises to the cytosol. It catalyses the reaction an alcohol + 3'-phosphoadenylyl sulfate = an alkyl sulfate + adenosine 3',5'-bisphosphate + H(+). The enzyme catalyses glycolithocholate + 3'-phosphoadenylyl sulfate = sulfoglycolithocholate + adenosine 3',5'-bisphosphate + H(+). The catalysed reaction is taurolithocholate + 3'-phosphoadenylyl sulfate = taurolithocholate 3-sulfate + adenosine 3',5'-bisphosphate + H(+). It carries out the reaction 3beta-hydroxyandrost-5-en-17-one + 3'-phosphoadenylyl sulfate = dehydroepiandrosterone 3-sulfate + adenosine 3',5'-bisphosphate + H(+). Functionally, sulfotransferase that utilizes 3'-phospho-5'-adenylyl sulfate (PAPS) as sulfonate donor to catalyze the sulfonation of the hydroxyl group of hydroxysteroids and bile acids. The sequence is that of Sulfotransferase 2A6 from Mus musculus (Mouse).